The primary structure comprises 702 residues: Methionine--tRNA ligase (702 aa).

Residues 23–33 (PYANGPLHLGH) carry the 'HIGH' region motif. Residues Cys-154, Cys-157, Cys-167, and Cys-170 each coordinate Zn(2+). The short motif at 341–345 (KMSKS) is the 'KMSKS' region element. Lys-344 contacts ATP. Residues 562–593 (LAPPPASAKQQNASMSNTAPPPTAEKPETTAP) are disordered. Positions 569–578 (AKQQNASMSN) are enriched in polar residues. The tRNA-binding domain occupies 599 to 702 (DFAKLDLRIG…SSAQPGMPVR (104 aa)).

The protein belongs to the class-I aminoacyl-tRNA synthetase family. MetG type 1 subfamily. As to quaternary structure, homodimer. It depends on Zn(2+) as a cofactor.

It localises to the cytoplasm. The enzyme catalyses tRNA(Met) + L-methionine + ATP = L-methionyl-tRNA(Met) + AMP + diphosphate. Functionally, is required not only for elongation of protein synthesis but also for the initiation of all mRNA translation through initiator tRNA(fMet) aminoacylation. This Xylella fastidiosa (strain 9a5c) protein is Methionine--tRNA ligase.